The sequence spans 278 residues: Replication protein A 32 kDa subunit B (278 aa).

A DNA-binding region (OB) is located at residues 70–143 (VVIVGRISRM…RSVNVFSVRP (74 aa)).

Belongs to the replication factor A protein 2 family. As to quaternary structure, heterotrimer of RPA1, RPA2 and RPA3 (canonical replication protein A complex). In terms of processing, phosphorylated in a cell-cycle-dependent manner (from the S phase until mitosis). In response to DNA damage, recruited to DNA-repair nuclear foci, as a hypophosphorylated form.

It is found in the nucleus. Functionally, component of the replication protein A complex (RPA) required for DNA recombination, repair and replication. The activity of RPA is mediated by single-stranded DNA binding and protein interactions. Required fo cell division in meristems. Involved in the maintenance of transcriptional epigenetic gene silencing (TGS) at specific loci (including some transposons) by regulating histone H3 acetylation, 'Lys-4' and 'Lys-9' methylation. The polypeptide is Replication protein A 32 kDa subunit B (RPA2B) (Arabidopsis thaliana (Mouse-ear cress)).